Reading from the N-terminus, the 362-residue chain is Aminomethyltransferase (362 aa).

Belongs to the GcvT family. The glycine cleavage system is composed of four proteins: P, T, L and H.

It carries out the reaction N(6)-[(R)-S(8)-aminomethyldihydrolipoyl]-L-lysyl-[protein] + (6S)-5,6,7,8-tetrahydrofolate = N(6)-[(R)-dihydrolipoyl]-L-lysyl-[protein] + (6R)-5,10-methylene-5,6,7,8-tetrahydrofolate + NH4(+). Its function is as follows. The glycine cleavage system catalyzes the degradation of glycine. The polypeptide is Aminomethyltransferase (Listeria monocytogenes serotype 4b (strain F2365)).